The following is a 363-amino-acid chain: Protein-glutamate methylesterase/protein-glutamine glutaminase of group 3 operon (363 aa).

Positions arginine 7–arginine 124 constitute a Response regulatory domain. At aspartate 58 the chain carries 4-aspartylphosphate. The region spanning proline 166–lysine 357 is the CheB-type methylesterase domain. Active-site residues include serine 177, histidine 203, and aspartate 299.

Belongs to the CheB family. Phosphorylated by CheA. Phosphorylation of the N-terminal regulatory domain activates the methylesterase activity.

It localises to the cytoplasm. The enzyme catalyses [protein]-L-glutamate 5-O-methyl ester + H2O = L-glutamyl-[protein] + methanol + H(+). The catalysed reaction is L-glutaminyl-[protein] + H2O = L-glutamyl-[protein] + NH4(+). Its function is as follows. Involved in chemotaxis. Part of a chemotaxis signal transduction system that modulates chemotaxis in response to various stimuli. Catalyzes the demethylation of specific methylglutamate residues introduced into the chemoreceptors (methyl-accepting chemotaxis proteins or MCP) by CheR. Also mediates the irreversible deamidation of specific glutamine residues to glutamic acid. This is Protein-glutamate methylesterase/protein-glutamine glutaminase of group 3 operon from Rhodopseudomonas palustris (strain ATCC BAA-98 / CGA009).